We begin with the raw amino-acid sequence, 294 residues long: Fatty acyl-CoA reductase Rv0547c (294 aa).

NADP(+) is bound by residues serine 49, serine 50, isoleucine 52, arginine 72, aspartate 97, leucine 98, asparagine 124, tyrosine 192, lysine 196, valine 225, and threonine 227. Tyrosine 192 acts as the Proton acceptor in catalysis.

This sequence belongs to the short-chain dehydrogenases/reductases (SDR) family.

The protein localises to the host mitochondrion. The catalysed reaction is hexadecanal + NADP(+) + CoA = hexadecanoyl-CoA + NADPH + H(+). Its function is as follows. Oxidoreductase that promotes the persistence of M.tuberculosis in host macrophages by reprogramming the fatty acid metabolism in host mitochondria. When localized in the host mitochondria, it potentially acts on unknown lipid substrates and converts them into products that directly or indirectly alter the lipid profile of the mitochondria. This change in lipid profile results in increased mitochondrial membrane fluidity, enhanced endogenous fatty acid oxidation and increased mitochondrial spare respiratory capacity. All these events eventually favor M.tuberculosis persistence in the host macrophages. In vitro, can catalyze the NADPH-dependent reduction of palmitoyl-CoA (hexadecanoyl-CoA). The polypeptide is Fatty acyl-CoA reductase Rv0547c (Mycobacterium tuberculosis (strain ATCC 25618 / H37Rv)).